Here is a 365-residue protein sequence, read N- to C-terminus: Autoinducer 2-binding periplasmic protein LuxP (365 aa).

Positions 1–23 (MKKALLFSLISMVGFSPASQATQ) are cleaved as a signal peptide.

It belongs to the bacterial solute-binding protein 2 family.

It is found in the periplasm. Its function is as follows. Binds to the signaling molecule autoinducer 2 (AI-2), a furanosyl borate diester, (3a-methyl-5,6-dihydrofuro-[2,3d][1,3,2]dioxaborole-2,2,6,6a-tetraol). This complex then interacts with the LuxQ sensor protein. The sequence is that of Autoinducer 2-binding periplasmic protein LuxP (luxP) from Vibrio harveyi (Beneckea harveyi).